Reading from the N-terminus, the 86-residue chain is Small ribosomal subunit protein uS17 (86 aa).

This sequence belongs to the universal ribosomal protein uS17 family. As to quaternary structure, part of the 30S ribosomal subunit.

Its function is as follows. One of the primary rRNA binding proteins, it binds specifically to the 5'-end of 16S ribosomal RNA. This chain is Small ribosomal subunit protein uS17, found in Streptococcus gordonii (strain Challis / ATCC 35105 / BCRC 15272 / CH1 / DL1 / V288).